A 424-amino-acid polypeptide reads, in one-letter code: Methylenetetrahydrofolate--tRNA-(uracil-5-)-methyltransferase TrmFO 1 (424 aa).

8–13 (GAGLSG) is a binding site for FAD.

Belongs to the MnmG family. TrmFO subfamily. FAD serves as cofactor.

The protein resides in the cytoplasm. It catalyses the reaction uridine(54) in tRNA + (6R)-5,10-methylene-5,6,7,8-tetrahydrofolate + NADH + H(+) = 5-methyluridine(54) in tRNA + (6S)-5,6,7,8-tetrahydrofolate + NAD(+). It carries out the reaction uridine(54) in tRNA + (6R)-5,10-methylene-5,6,7,8-tetrahydrofolate + NADPH + H(+) = 5-methyluridine(54) in tRNA + (6S)-5,6,7,8-tetrahydrofolate + NADP(+). In terms of biological role, catalyzes the folate-dependent formation of 5-methyl-uridine at position 54 (M-5-U54) in all tRNAs. This chain is Methylenetetrahydrofolate--tRNA-(uracil-5-)-methyltransferase TrmFO 1, found in Mycoplasma mycoides subsp. mycoides SC (strain CCUG 32753 / NCTC 10114 / PG1).